The primary structure comprises 58 residues: uncharacterized protein (58 aa).

This is an uncharacterized protein from Treponema pallidum (strain Nichols).